We begin with the raw amino-acid sequence, 440 residues long: MNVQLNEIWNRTLELLKGEMTEISFNTWILTIEPISIDSNTITLGVPADFNKGILEARYSYLIKNALRQISHRDYNIYFAIPSQTPVKPVAQEYTEDSNMSFLNPKYTFDTFVIGNGNRFAHAASLAVAEAPAKAYNPLFLYGGVGLGKTHLMHAIGHFVLSQNPALKVLYVSSEKFTNELINAIRDDKNEEFRYKYRNIDVLLIDDIQFIGGKERTEEEFFHTFNALYEANKQIIISSDKPPKEIPTLEDRLRSRFEWGLIADIAPPDLETRIAILRKKAQLENLDVPDDVMVFIADKVASNIRELEGALNRVIAYSTLTENIINVDMAVEALKDMLNNSKAIIINSKTIQEAVARYFHLKTDDLKSKRRSRDVSFPRQIAMYLCRDMTDMSLPKIGDEFGGRDHTTVIHACEKINNDLNNSTELKRTVEEIKKNITGG.

Residues 1–93 (MNVQLNEIWN…QTPVKPVAQE (93 aa)) form a domain I, interacts with DnaA modulators region. The domain II stretch occupies residues 94 to 101 (YTEDSNMS). Residues 102–318 (FLNPKYTFDT…GALNRVIAYS (217 aa)) form a domain III, AAA+ region region. ATP-binding residues include Gly-146, Gly-148, Lys-149, and Thr-150. A domain IV, binds dsDNA region spans residues 319–440 (TLTENIINVD…EEIKKNITGG (122 aa)).

Belongs to the DnaA family. As to quaternary structure, oligomerizes as a right-handed, spiral filament on DNA at oriC.

It localises to the cytoplasm. In terms of biological role, plays an essential role in the initiation and regulation of chromosomal replication. ATP-DnaA binds to the origin of replication (oriC) to initiate formation of the DNA replication initiation complex once per cell cycle. Binds the DnaA box (a 9 base pair repeat at the origin) and separates the double-stranded (ds)DNA. Forms a right-handed helical filament on oriC DNA; dsDNA binds to the exterior of the filament while single-stranded (ss)DNA is stabiized in the filament's interior. The ATP-DnaA-oriC complex binds and stabilizes one strand of the AT-rich DNA unwinding element (DUE), permitting loading of DNA polymerase. After initiation quickly degrades to an ADP-DnaA complex that is not apt for DNA replication. Binds acidic phospholipids. The protein is Chromosomal replication initiator protein DnaA of Ruminiclostridium cellulolyticum (strain ATCC 35319 / DSM 5812 / JCM 6584 / H10) (Clostridium cellulolyticum).